Here is a 53-residue protein sequence, read N- to C-terminus: MAIKRGVRLQCNESKSINYITTKNAKNNPDRLSLNKFCPKCRKVTTHVEIKKK.

This sequence belongs to the bacterial ribosomal protein bL33 family.

This Ureaplasma parvum serovar 3 (strain ATCC 27815 / 27 / NCTC 11736) protein is Large ribosomal subunit protein bL33.